A 358-amino-acid polypeptide reads, in one-letter code: GTPase Obg (358 aa).

One can recognise an Obg domain in the interval 1 to 158 (MFVDNVDIYV…RHVRLELKLI (158 aa)). Residues 159–355 (ADVGLVGFPN…LKYLLHESVR (197 aa)) form the OBG-type G domain. GTP is bound by residues 165-172 (GFPNVGKS), 190-194 (FTTLI), 212-215 (DIPG), 280-283 (SKVD), and 336-338 (SSA). Mg(2+)-binding residues include S172 and T192.

The protein belongs to the TRAFAC class OBG-HflX-like GTPase superfamily. OBG GTPase family. Monomer. Requires Mg(2+) as cofactor.

Its subcellular location is the cytoplasm. An essential GTPase which binds GTP, GDP and possibly (p)ppGpp with moderate affinity, with high nucleotide exchange rates and a fairly low GTP hydrolysis rate. Plays a role in control of the cell cycle, stress response, ribosome biogenesis and in those bacteria that undergo differentiation, in morphogenesis control. The polypeptide is GTPase Obg (Wolinella succinogenes (strain ATCC 29543 / DSM 1740 / CCUG 13145 / JCM 31913 / LMG 7466 / NCTC 11488 / FDC 602W) (Vibrio succinogenes)).